We begin with the raw amino-acid sequence, 225 residues long: NAD(P)H-quinone oxidoreductase subunit K, chloroplastic (225 aa).

Cysteine 43, cysteine 44, cysteine 108, and cysteine 139 together coordinate [4Fe-4S] cluster.

It belongs to the complex I 20 kDa subunit family. As to quaternary structure, NDH is composed of at least 16 different subunits, 5 of which are encoded in the nucleus. The cofactor is [4Fe-4S] cluster.

The protein resides in the plastid. It is found in the chloroplast thylakoid membrane. It catalyses the reaction a plastoquinone + NADH + (n+1) H(+)(in) = a plastoquinol + NAD(+) + n H(+)(out). The catalysed reaction is a plastoquinone + NADPH + (n+1) H(+)(in) = a plastoquinol + NADP(+) + n H(+)(out). NDH shuttles electrons from NAD(P)H:plastoquinone, via FMN and iron-sulfur (Fe-S) centers, to quinones in the photosynthetic chain and possibly in a chloroplast respiratory chain. The immediate electron acceptor for the enzyme in this species is believed to be plastoquinone. Couples the redox reaction to proton translocation, and thus conserves the redox energy in a proton gradient. This Populus trichocarpa (Western balsam poplar) protein is NAD(P)H-quinone oxidoreductase subunit K, chloroplastic.